Reading from the N-terminus, the 294-residue chain is Type I ribosome-inactivating protein trichoanguina (294 aa).

The signal sequence occupies residues 1–19; the sequence is MALSFFFLAISLGSPTAIG. N70 is a glycosylation site (N-linked (GlcNAc...) asparagine). Active-site residues include E177 and R180. The N-linked (GlcNAc...) asparagine glycan is linked to N220. Residues 265-294 constitute a propeptide that is removed on maturation; that stretch reads VGSEYDIPTTILHPGAMGMLHNQNGNYVTM.

Belongs to the ribosome-inactivating protein family. Type 1 RIP subfamily.

The catalysed reaction is Endohydrolysis of the N-glycosidic bond at one specific adenosine on the 28S rRNA.. Inhibits protein synthesis by depurinating 28S rRNA in ribosomes. The chain is Type I ribosome-inactivating protein trichoanguina (TCA) from Trichosanthes anguina (Snake gourd).